The primary structure comprises 431 residues: Putative serine/threonine-protein kinase A (431 aa).

In terms of domain architecture, Protein kinase spans 20 to 279 (YLNKGIVGLG…VREIFQIPYI (260 aa)). ATP-binding positions include 26–34 (VGLGSYGEA) and Lys-49. The active-site Proton acceptor is the Asp-147. The 99-residue stretch at 331-429 (DVTHRGHVNK…WVHAIQRGIG (99 aa)) folds into the PH domain.

This sequence belongs to the protein kinase superfamily. Ser/Thr protein kinase family.

It carries out the reaction L-seryl-[protein] + ATP = O-phospho-L-seryl-[protein] + ADP + H(+). The catalysed reaction is L-threonyl-[protein] + ATP = O-phospho-L-threonyl-[protein] + ADP + H(+). This chain is Putative serine/threonine-protein kinase A (NRKA), found in Trypanosoma brucei brucei.